A 131-amino-acid polypeptide reads, in one-letter code: Maturin (131 aa).

Over residues 107 to 120 (FEEYNADVEEEEPE) the composition is skewed to acidic residues. The disordered stretch occupies residues 107–131 (FEEYNADVEEEEPEADHQQMGVSQQ).

This sequence belongs to the MTURN family.

The protein localises to the cytoplasm. Involved in early neuronal development; required for cell cycle exit and differentiation of primary neurons. Cooperates synergistically with pak3 to promote primary neural differentiation within the neural plate. May play a role in promoting megakaryocyte differentiation. This Xenopus laevis (African clawed frog) protein is Maturin (mturn).